Reading from the N-terminus, the 164-residue chain is FMN reductase (NADH) RutF (164 aa).

It belongs to the non-flavoprotein flavin reductase family. RutF subfamily.

It catalyses the reaction FMNH2 + NAD(+) = FMN + NADH + 2 H(+). Functionally, catalyzes the reduction of FMN to FMNH2 which is used to reduce pyrimidine by RutA via the Rut pathway. The sequence is that of FMN reductase (NADH) RutF from Escherichia coli O45:K1 (strain S88 / ExPEC).